A 156-amino-acid polypeptide reads, in one-letter code: Homeobox-leucine zipper protein ATHB-52 (156 aa).

Residues 8 to 67 (GKNKKKRLTQDQVRQLEKCFTMNKKLEPDLKLQLSNQLGLPQRQVAVWFQNKRARFKTQS) constitute a DNA-binding region (homeobox). The leucine-zipper stretch occupies residues 68-96 (LEVQHCTLQSKHEAALSDKAKLEHQVQFL).

Belongs to the HD-ZIP homeobox family. Class I subfamily. In terms of tissue distribution, expressed in roots and flowers.

The protein resides in the nucleus. Functionally, probable transcription factor. This is Homeobox-leucine zipper protein ATHB-52 (ATHB-52) from Arabidopsis thaliana (Mouse-ear cress).